The chain runs to 660 residues: Macrolide export ATP-binding/permease protein MacB (660 aa).

Positions 10 to 248 (LVLENIVRKF…AKGQALQGKQ (239 aa)) constitute an ABC transporter domain. 46 to 53 (GASGSGKS) provides a ligand contact to ATP. 4 helical membrane-spanning segments follow: residues 285–305 (FLTM…VALG), 532–552 (ILTL…GIGV), 593–613 (IIGG…FVLF), and 625–645 (SIII…FSPA).

It belongs to the ABC transporter superfamily. Macrolide exporter (TC 3.A.1.122) family. As to quaternary structure, homodimer.

It localises to the cell inner membrane. Non-canonical ABC transporter that contains transmembrane domains (TMD), which form a pore in the inner membrane, and an ATP-binding domain (NBD), which is responsible for energy generation. Confers resistance against macrolides. The sequence is that of Macrolide export ATP-binding/permease protein MacB from Bartonella quintana (strain Toulouse) (Rochalimaea quintana).